Here is a 158-residue protein sequence, read N- to C-terminus: uncharacterized protein (158 aa).

This is an uncharacterized protein from Saccharomyces cerevisiae (strain ATCC 204508 / S288c) (Baker's yeast).